Reading from the N-terminus, the 184-residue chain is Tumor necrosis factor alpha-induced protein 8-like protein 2 (184 aa).

Ser-3 carries the post-translational modification Phosphoserine.

This sequence belongs to the TNFAIP8 family. TNFAIP8L2 subfamily. May interact with CASP8; however, such result is unclear since could not reproduce the interaction with CASP8. Interacts with RAC1. Post-translationally, phosphorylated by TAK1/MAP3K7; this phosphorylation triggers association with BTRC and subsequent ubiquitination and degradation. In terms of processing, ubiquitinated in a BTRC-depdent manner; leading to degradation mediated through the proteasome pathway. Expressed in thymus, spleen, lymph node and small intestine, but not in liver, heart, muscle, testis, spinal cord or brain. Up-regulated in the spinal cord of mice with experimental autoimmune encephalomyelitis. Constitutively expressed by macrophages, B and T-lymphocytes at various developmental stages.

The protein localises to the cytoplasm. The protein resides in the nucleus. Its subcellular location is the lysosome. In terms of biological role, acts as a negative regulator of innate and adaptive immunity by maintaining immune homeostasis. Plays a regulatory role in the Toll-like signaling pathway by determining the strength of LPS-induced signaling and gene expression. Inhibits TCR-mediated T-cell activation and negatively regulate T-cell function to prevent hyperresponsiveness. Also inhibits autolysosome formation via negatively modulating MTOR activation by interacting with RAC1 and promoting the disassociation of the RAC1-MTOR complex. Plays an essential role in NK-cell biology by acting as a checkpoint and displaying an expression pattern correlating with NK-cell maturation process and by negatively regulating NK-cell maturation and antitumor immunity. Mechanistically, suppresses IL-15-triggered mTOR activity in NK-cells. The chain is Tumor necrosis factor alpha-induced protein 8-like protein 2 (Tnfaip8l2) from Mus musculus (Mouse).